We begin with the raw amino-acid sequence, 439 residues long: ATP-dependent RNA helicase RhlB (439 aa).

The short motif at Gln9–Ala37 is the Q motif element. Residues Leu40 to Val219 enclose the Helicase ATP-binding domain. Residue Ala53 to Thr60 participates in ATP binding. Positions Asp165 to Asp168 match the DEAD box motif. The Helicase C-terminal domain maps to Lys243–Leu390. The interval Pro395–Pro439 is disordered. Over residues Ser425–Pro439 the composition is skewed to basic residues.

Belongs to the DEAD box helicase family. RhlB subfamily. As to quaternary structure, component of the RNA degradosome, which is a multiprotein complex involved in RNA processing and mRNA degradation.

The protein resides in the cytoplasm. The enzyme catalyses ATP + H2O = ADP + phosphate + H(+). Its function is as follows. DEAD-box RNA helicase involved in RNA degradation. Has RNA-dependent ATPase activity and unwinds double-stranded RNA. This Shewanella sp. (strain MR-4) protein is ATP-dependent RNA helicase RhlB.